An 826-amino-acid chain; its full sequence is Elongator complex protein 2 (826 aa).

WD repeat units lie at residues 13-53 (CCPN…VVTN), 56-100 (GHTA…LLKA), 105-152 (GHEG…VMCL), 158-200 (GNGF…FQKV), 205-246 (GHED…TSLE), 281-329 (GHEN…GVWL), 339-378 (GNTL…PREW), 386-425 (GHFD…DQSQ), 436-474 (IHGY…VENF), 565-609 (GHGY…QVQN), 612-651 (FHSL…SPEF), 667-706 (VHSR…DDCI), 712-753 (PCSS…CLYT), and 777-826 (SHTL…KCAL).

This sequence belongs to the WD repeat ELP2 family. Component of the elongator complex which consists of ELP1, ELP2, ELP3, ELP4, ELP5 and ELP6. Interacts with STAT3 and JAKs.

The protein localises to the cytoplasm. It is found in the nucleus. Its pathway is tRNA modification; 5-methoxycarbonylmethyl-2-thiouridine-tRNA biosynthesis. Its function is as follows. Component of the elongator complex which is required for multiple tRNA modifications, including mcm5U (5-methoxycarbonylmethyl uridine), mcm5s2U (5-methoxycarbonylmethyl-2-thiouridine), and ncm5U (5-carbamoylmethyl uridine). The elongator complex catalyzes the formation of carboxymethyluridine in the wobble base at position 34 in tRNAs. The chain is Elongator complex protein 2 (ELP2) from Homo sapiens (Human).